A 566-amino-acid polypeptide reads, in one-letter code: Beta,beta-carotene 15,15'-dioxygenase (566 aa).

4 residues coordinate Fe cation: H172, H237, H308, and H514. Residues 529–566 are disordered; it reads TPAKTQEDENSDHPTGLTAPGLGHGENDFTAGHGGKSL.

This sequence belongs to the carotenoid oxygenase family. The cofactor is Fe(2+).

It localises to the cytoplasm. The protein resides in the cytosol. The catalysed reaction is all-trans-beta-carotene + O2 = 2 all-trans-retinal. Its pathway is cofactor metabolism; retinol metabolism. Its function is as follows. Symmetrically cleaves beta-carotene into two molecules of retinal using a dioxygenase mechanism. This is Beta,beta-carotene 15,15'-dioxygenase from Rattus norvegicus (Rat).